The following is a 224-amino-acid chain: Thiamine-phosphate synthase (224 aa).

Residues Gln44 to Lys48 and Asn79 contribute to the 4-amino-2-methyl-5-(diphosphooxymethyl)pyrimidine site. Mg(2+)-binding residues include Asp80 and Asp99. Position 117 (Ser117) interacts with 4-amino-2-methyl-5-(diphosphooxymethyl)pyrimidine. Thr143–Thr145 lines the 2-[(2R,5Z)-2-carboxy-4-methylthiazol-5(2H)-ylidene]ethyl phosphate pocket. 4-amino-2-methyl-5-(diphosphooxymethyl)pyrimidine is bound at residue Lys146. 2-[(2R,5Z)-2-carboxy-4-methylthiazol-5(2H)-ylidene]ethyl phosphate contacts are provided by residues Gly175 and Ile195–Ser196.

It belongs to the thiamine-phosphate synthase family. Mg(2+) serves as cofactor.

The catalysed reaction is 2-[(2R,5Z)-2-carboxy-4-methylthiazol-5(2H)-ylidene]ethyl phosphate + 4-amino-2-methyl-5-(diphosphooxymethyl)pyrimidine + 2 H(+) = thiamine phosphate + CO2 + diphosphate. It carries out the reaction 2-(2-carboxy-4-methylthiazol-5-yl)ethyl phosphate + 4-amino-2-methyl-5-(diphosphooxymethyl)pyrimidine + 2 H(+) = thiamine phosphate + CO2 + diphosphate. The enzyme catalyses 4-methyl-5-(2-phosphooxyethyl)-thiazole + 4-amino-2-methyl-5-(diphosphooxymethyl)pyrimidine + H(+) = thiamine phosphate + diphosphate. Its pathway is cofactor biosynthesis; thiamine diphosphate biosynthesis; thiamine phosphate from 4-amino-2-methyl-5-diphosphomethylpyrimidine and 4-methyl-5-(2-phosphoethyl)-thiazole: step 1/1. In terms of biological role, condenses 4-methyl-5-(beta-hydroxyethyl)thiazole monophosphate (THZ-P) and 2-methyl-4-amino-5-hydroxymethyl pyrimidine pyrophosphate (HMP-PP) to form thiamine monophosphate (TMP). The protein is Thiamine-phosphate synthase of Bacillus licheniformis (strain ATCC 14580 / DSM 13 / JCM 2505 / CCUG 7422 / NBRC 12200 / NCIMB 9375 / NCTC 10341 / NRRL NRS-1264 / Gibson 46).